The sequence spans 265 residues: Small ribosomal subunit protein eS1 (265 aa).

2 disordered regions span residues 1–24 and 240–265; these read MTQGKNPGLKAGGGKKGAKKRTID and HEKKGEKATGRDGAPEEQAAQNLLAQ. The segment covering 240-253 has biased composition (basic and acidic residues); it reads HEKKGEKATGRDGA.

This sequence belongs to the eukaryotic ribosomal protein eS1 family. In terms of assembly, component of the small ribosomal subunit. Mature ribosomes consist of a small (40S) and a large (60S) subunit. The 40S subunit contains about 33 different proteins and 1 molecule of RNA (18S). The 60S subunit contains about 49 different proteins and 3 molecules of RNA (25S, 5.8S and 5S).

It is found in the cytoplasm. The polypeptide is Small ribosomal subunit protein eS1 (Tetrahymena thermophila (strain SB210)).